Here is a 108-residue protein sequence, read N- to C-terminus: LBH domain-containing protein 2 (108 aa).

The segment covering 1-11 (MSTPRPAPPQP) has biased composition (pro residues). Positions 1-108 (MSTPRPAPPQ…SEDPAAPARG (108 aa)) are disordered. Positions 37-62 (QRLPSIVVEPSEADPVESGELRWPLE) constitute an LBH domain. A compositionally biased stretch (low complexity) spans 63–85 (SAQRGPSQSRAAAAPSPSLPGEP).

In Homo sapiens (Human), this protein is LBH domain-containing protein 2.